Reading from the N-terminus, the 444-residue chain is MPFIVNTDADRESMLHATGVSSFDELIVDIPREVRLNKALELAPAADEMEVRSILESMAAANRSTADYVSFLGGGAYDHFLPSAIKAIVSRSEFYTAYTPYQAEVSQGTLQAIYEYQSLICRLYGMDVTNASMYDGATALAEAVLMAIGVNGRQKVVVAGKLHPWNSSVLKTYLEASDHSAVVQNVVEDGVGSIEVLKGLMDDTVAAVVVQQPNFYGCLEDVEAIGRLAHEHGALFIVSANPVSLGVLEAPGAYGADISVGEGQPLGSSQSFGGPYLGIFSVRQELVRKLPGRLVGMTKDSNGQDGFILTLQTREQHIRREKATSNICSNQALNALQAAVYLSLLGKQGLSEVAGQSLSRAHYLAGRIAAIPGFSIRYNAPFFNEFVVDTPIPPSEVVRKMLEKKVFAGCDLGEFGDEGLLVAVTEKRTKAQLDMFADALGELA.

The protein belongs to the GcvP family. N-terminal subunit subfamily. The glycine cleavage system is composed of four proteins: P, T, L and H. In this organism, the P 'protein' is a heterodimer of two subunits.

It carries out the reaction N(6)-[(R)-lipoyl]-L-lysyl-[glycine-cleavage complex H protein] + glycine + H(+) = N(6)-[(R)-S(8)-aminomethyldihydrolipoyl]-L-lysyl-[glycine-cleavage complex H protein] + CO2. In terms of biological role, the glycine cleavage system catalyzes the degradation of glycine. The P protein binds the alpha-amino group of glycine through its pyridoxal phosphate cofactor; CO(2) is released and the remaining methylamine moiety is then transferred to the lipoamide cofactor of the H protein. This chain is Probable glycine dehydrogenase (decarboxylating) subunit 1, found in Chlorobium luteolum (strain DSM 273 / BCRC 81028 / 2530) (Pelodictyon luteolum).